Here is a 257-residue protein sequence, read N- to C-terminus: Aspartate/glutamate leucyltransferase (257 aa).

The protein belongs to the R-transferase family. Bpt subfamily.

Its subcellular location is the cytoplasm. The catalysed reaction is N-terminal L-glutamyl-[protein] + L-leucyl-tRNA(Leu) = N-terminal L-leucyl-L-glutamyl-[protein] + tRNA(Leu) + H(+). It catalyses the reaction N-terminal L-aspartyl-[protein] + L-leucyl-tRNA(Leu) = N-terminal L-leucyl-L-aspartyl-[protein] + tRNA(Leu) + H(+). In terms of biological role, functions in the N-end rule pathway of protein degradation where it conjugates Leu from its aminoacyl-tRNA to the N-termini of proteins containing an N-terminal aspartate or glutamate. This chain is Aspartate/glutamate leucyltransferase, found in Phenylobacterium zucineum (strain HLK1).